Here is a 511-residue protein sequence, read N- to C-terminus: Putative thymidine phosphorylase (511 aa).

Belongs to the thymidine/pyrimidine-nucleoside phosphorylase family. Type 2 subfamily.

It catalyses the reaction thymidine + phosphate = 2-deoxy-alpha-D-ribose 1-phosphate + thymine. The sequence is that of Putative thymidine phosphorylase from Polaromonas sp. (strain JS666 / ATCC BAA-500).